A 275-amino-acid chain; its full sequence is Transmembrane protein 106B (275 aa).

The segment at 1–24 is disordered; that stretch reads MGKSLSHLPLHSNKEDGYDGVTST. A lipid anchor (N-myristoyl glycine) is attached at Gly2. At 2 to 97 the chain is on the cytoplasmic side; the sequence is GKSLSHLPLH…QRLRPRRTKL (96 aa). Position 34 is a phosphoserine (Ser34). A helical membrane pass occupies residues 98-118; the sequence is YVMASVFVCLLLSGLAVFFLF. The Lumenal segment spans residues 119–275; that stretch reads PRSIDVKYIG…EYLNVLQPQQ (157 aa). Residues Asn146, Asn152, Asn165, and Asn184 are each glycosylated (N-linked (GlcNAc...) asparagine). A disulfide bridge connects residues Cys215 and Cys254. An N-linked (GlcNAc...) asparagine glycan is attached at Asn257.

This sequence belongs to the TMEM106 family. As to quaternary structure, can form homomers. Interacts (via N-terminus) with MAP6 (via C-terminus). Interacts (via C-terminus) with the vacuolar-type ATPase subunit ATP6AP1. Interacts (via N-terminus) with AP2M1 and CLTC. Interacts with TMEM106C. In terms of tissue distribution, expressed in cortical neurons (at protein level).

It is found in the late endosome membrane. Its subcellular location is the lysosome membrane. The protein resides in the cell membrane. Involved in dendrite morphogenesis and maintenance by regulating lysosomal trafficking. May act as a molecular brake for retrograde transport of late endosomes/lysosomes, possibly via its interaction with MAP6. In neurons, may also play a role in the regulation of lysosomal size and responsiveness to stress. Required for proper lysosomal acidification. Functionally, in neurons, involved in the transport of late endosomes/lysosomes. May be involved in dendrite morphogenesis and maintenance by regulating lysosomal trafficking. May act as a molecular brake for retrograde transport of late endosomes/lysosomes, possibly via its interaction with MAP6. In motoneurons, may mediate the axonal transport of lysosomes and axonal sorting at the initial segment. It remains unclear whether TMEM106B affects the transport of moving lysosomes in the anterograde or retrograde direction in neurites and whether it is particularly important in the sorting of lysosomes in axons or in dendrites. In neurons, may also play a role in the regulation of lysosomal size and responsiveness to stress. Required for proper lysosomal acidification. In Rattus norvegicus (Rat), this protein is Transmembrane protein 106B (Tmem106b).